The following is a 202-amino-acid chain: Protein GrpE (202 aa).

The span at 21–37 (EELKNEEVKEETHEHEH) shows a compositional bias: basic and acidic residues. The interval 21–52 (EELKNEEVKEETHEHEHKHGGHTCCGKHGHKH) is disordered. The span at 38-51 (KHGGHTCCGKHGHK) shows a compositional bias: basic residues.

Belongs to the GrpE family. As to quaternary structure, homodimer.

It localises to the cytoplasm. Participates actively in the response to hyperosmotic and heat shock by preventing the aggregation of stress-denatured proteins, in association with DnaK and GrpE. It is the nucleotide exchange factor for DnaK and may function as a thermosensor. Unfolded proteins bind initially to DnaJ; upon interaction with the DnaJ-bound protein, DnaK hydrolyzes its bound ATP, resulting in the formation of a stable complex. GrpE releases ADP from DnaK; ATP binding to DnaK triggers the release of the substrate protein, thus completing the reaction cycle. Several rounds of ATP-dependent interactions between DnaJ, DnaK and GrpE are required for fully efficient folding. The polypeptide is Protein GrpE (Fusobacterium nucleatum subsp. polymorphum (Fusobacterium polymorphum)).